The primary structure comprises 406 residues: Succinylornithine transaminase (406 aa).

Lys-252 is subject to N6-(pyridoxal phosphate)lysine.

Belongs to the class-III pyridoxal-phosphate-dependent aminotransferase family. AstC subfamily. It depends on pyridoxal 5'-phosphate as a cofactor.

It catalyses the reaction N(2)-succinyl-L-ornithine + 2-oxoglutarate = N-succinyl-L-glutamate 5-semialdehyde + L-glutamate. It functions in the pathway amino-acid degradation; L-arginine degradation via AST pathway; L-glutamate and succinate from L-arginine: step 3/5. Its function is as follows. Catalyzes the transamination of N(2)-succinylornithine and alpha-ketoglutarate into N(2)-succinylglutamate semialdehyde and glutamate. Can also act as an acetylornithine aminotransferase. The protein is Succinylornithine transaminase of Shigella boydii serotype 18 (strain CDC 3083-94 / BS512).